We begin with the raw amino-acid sequence, 127 residues long: Large ribosomal subunit protein bL12 (127 aa).

The interval 94–114 (VDGAPSTLKEAASKEEAEEAK) is disordered. Residues 104–114 (AASKEEAEEAK) show a composition bias toward basic and acidic residues.

It belongs to the bacterial ribosomal protein bL12 family. Homodimer. Part of the ribosomal stalk of the 50S ribosomal subunit. Forms a multimeric L10(L12)X complex, where L10 forms an elongated spine to which 2 to 4 L12 dimers bind in a sequential fashion. Binds GTP-bound translation factors.

In terms of biological role, forms part of the ribosomal stalk which helps the ribosome interact with GTP-bound translation factors. Is thus essential for accurate translation. This is Large ribosomal subunit protein bL12 from Nitratidesulfovibrio vulgaris (strain ATCC 29579 / DSM 644 / CCUG 34227 / NCIMB 8303 / VKM B-1760 / Hildenborough) (Desulfovibrio vulgaris).